The primary structure comprises 322 residues: MSPENQSSVSEFLLLGLPIRPEQQAVFFALFLGMYLTTVLGNLLIMLLIQLDSHLHTPMYFFLSHLALTDISFSSVTVPKMLMNMQTQHLAVFYKGCISQTYFFIFFADLDSFLITSMAYDRYVAICHPLHYATIMTQSQCVMLVAGSWVIACACALLHTLLLAQLSFCADHIIPHYFCDLGALLKLSCSDTSLNQLAIFTAALTAIMLPFLCILVSYGHIGVTILQIPSTKGICKALSTCGSHLSVVTIYYRTIIGLYFLPPSSNTNDKNIIASVIYTAVTPMLNPFIYSLRNKDIKGALRKLLSRSGAVAHACNLNTLGG.

Residues 1–25 (MSPENQSSVSEFLLLGLPIRPEQQA) are Extracellular-facing. The N-linked (GlcNAc...) asparagine glycan is linked to asparagine 5. Residues 26–49 (VFFALFLGMYLTTVLGNLLIMLLI) traverse the membrane as a helical segment. Residues 50–57 (QLDSHLHT) are Cytoplasmic-facing. Residues 58–79 (PMYFFLSHLALTDISFSSVTVP) form a helical membrane-spanning segment. At 80–100 (KMLMNMQTQHLAVFYKGCISQ) the chain is on the extracellular side. Residues cysteine 97 and cysteine 189 are joined by a disulfide bond. The helical transmembrane segment at 101–120 (TYFFIFFADLDSFLITSMAY) threads the bilayer. Residues 121–139 (DRYVAICHPLHYATIMTQS) are Cytoplasmic-facing. The chain crosses the membrane as a helical span at residues 140 to 158 (QCVMLVAGSWVIACACALL). Topologically, residues 159 to 196 (HTLLLAQLSFCADHIIPHYFCDLGALLKLSCSDTSLNQ) are extracellular. The helical transmembrane segment at 197–219 (LAIFTAALTAIMLPFLCILVSYG) threads the bilayer. At 220–236 (HIGVTILQIPSTKGICK) the chain is on the cytoplasmic side. Residues 237-259 (ALSTCGSHLSVVTIYYRTIIGLY) form a helical membrane-spanning segment. The Extracellular portion of the chain corresponds to 260-272 (FLPPSSNTNDKNI). The helical transmembrane segment at 273–292 (IASVIYTAVTPMLNPFIYSL) threads the bilayer. Over 293-322 (RNKDIKGALRKLLSRSGAVAHACNLNTLGG) the chain is Cytoplasmic.

This sequence belongs to the G-protein coupled receptor 1 family.

It localises to the cell membrane. Odorant receptor. This chain is Olfactory receptor 1J1, found in Homo sapiens (Human).